The sequence spans 115 residues: Large ribosomal subunit protein bL19 (115 aa).

The protein belongs to the bacterial ribosomal protein bL19 family.

Its function is as follows. This protein is located at the 30S-50S ribosomal subunit interface and may play a role in the structure and function of the aminoacyl-tRNA binding site. The protein is Large ribosomal subunit protein bL19 of Streptococcus mutans serotype c (strain ATCC 700610 / UA159).